The sequence spans 101 residues: Nucleoid-associated protein Acid345_1974 (101 aa).

Belongs to the YbaB/EbfC family. In terms of assembly, homodimer.

The protein resides in the cytoplasm. The protein localises to the nucleoid. Its function is as follows. Binds to DNA and alters its conformation. May be involved in regulation of gene expression, nucleoid organization and DNA protection. The polypeptide is Nucleoid-associated protein Acid345_1974 (Koribacter versatilis (strain Ellin345)).